The chain runs to 351 residues: Translation initiation factor eIF2B subunit beta (351 aa).

This sequence belongs to the eIF-2B alpha/beta/delta subunits family. As to quaternary structure, component of the translation initiation factor 2B (eIF2B) complex which is a heterodecamer of two sets of five different subunits: alpha, beta, gamma, delta and epsilon. Subunits alpha, beta and delta comprise a regulatory subcomplex and subunits epsilon and gamma comprise a catalytic subcomplex. Within the complex, the hexameric regulatory complex resides at the center, with the two heterodimeric catalytic subcomplexes bound on opposite sides.

It is found in the cytoplasm. It localises to the cytosol. Activated by the chemical integrated stress response (ISR) inhibitor ISRIB which stimulates guanine nucleotide exchange factor activity for both phosphorylated and unphosphorylated eIF2. In terms of biological role, acts as a component of the translation initiation factor 2B (eIF2B) complex, which catalyzes the exchange of GDP for GTP on eukaryotic initiation factor 2 (eIF2) gamma subunit. Its guanine nucleotide exchange factor activity is repressed when bound to eIF2 complex phosphorylated on the alpha subunit, thereby limiting the amount of methionyl-initiator methionine tRNA available to the ribosome and consequently global translation is repressed. This chain is Translation initiation factor eIF2B subunit beta (Eif2b2), found in Rattus norvegicus (Rat).